A 241-amino-acid polypeptide reads, in one-letter code: Chloride intracellular channel protein 1 (241 aa).

A2 carries the N-acetylalanine modification. Positions 2 to 90 (AEEQPQVELF…EEFLEAVLCP (89 aa)) are required for insertion into the membrane. K13 bears the N6-acetyllysine mark. The short motif at 24–27 (CPFS) is the G-site element. An intrachain disulfide couples C24 to C59. Residues 26 to 46 (FSQRLFMVLWLKGVTFNVTTV) traverse the membrane as a helical segment. The 141-residue stretch at 93 to 233 (YPKLAALNPE…PDDEEIELAY (141 aa)) folds into the GST C-terminal domain. K119 is modified (N6-acetyllysine). S121 carries the phosphoserine modification. Residue K131 is modified to N6-acetyllysine. S156 and S211 each carry phosphoserine. Y233 carries the phosphotyrosine modification.

The protein belongs to the chloride channel CLIC family. As to quaternary structure, monomer. Homodimer (in vitro). Interacts with TRAPPC2. Dimerization requires a conformation change that leads to the exposure of a large hydrophobic surface. In vivo, this may lead to membrane insertion. Expressed in neonatal and adult cardiomyocytes (at protein level).

It localises to the nucleus. Its subcellular location is the nucleus membrane. It is found in the cytoplasm. The protein resides in the cell membrane. The protein localises to the endoplasmic reticulum. The catalysed reaction is L-dehydroascorbate + 2 glutathione = glutathione disulfide + L-ascorbate. The enzyme catalyses chloride(in) = chloride(out). It carries out the reaction iodide(out) = iodide(in). It catalyses the reaction thiocyanate(in) = thiocyanate(out). The catalysed reaction is nitrate(in) = nitrate(out). The enzyme catalyses bromide(in) = bromide(out). It carries out the reaction fluoride(in) = fluoride(out). In terms of biological role, in the soluble state, catalyzes glutaredoxin-like thiol disulfide exchange reactions with reduced glutathione as electron donor. Reduces selenite and dehydroascorbate and may act as an antioxidant during oxidative stress response. Can insert into membranes and form voltage-dependent multi-ion conductive channels. Membrane insertion seems to be redox-regulated and may occur only under oxidizing conditions. Involved in regulation of the cell cycle. This chain is Chloride intracellular channel protein 1, found in Rattus norvegicus (Rat).